Here is a 347-residue protein sequence, read N- to C-terminus: S-adenosylmethionine:tRNA ribosyltransferase-isomerase (347 aa).

Belongs to the QueA family. In terms of assembly, monomer.

It localises to the cytoplasm. It carries out the reaction 7-aminomethyl-7-carbaguanosine(34) in tRNA + S-adenosyl-L-methionine = epoxyqueuosine(34) in tRNA + adenine + L-methionine + 2 H(+). Its pathway is tRNA modification; tRNA-queuosine biosynthesis. Its function is as follows. Transfers and isomerizes the ribose moiety from AdoMet to the 7-aminomethyl group of 7-deazaguanine (preQ1-tRNA) to give epoxyqueuosine (oQ-tRNA). The sequence is that of S-adenosylmethionine:tRNA ribosyltransferase-isomerase from Xylella fastidiosa (strain 9a5c).